The primary structure comprises 181 residues: Large ribosomal subunit protein uL5 (181 aa).

The protein belongs to the universal ribosomal protein uL5 family. Part of the 50S ribosomal subunit; part of the 5S rRNA/L5/L18/L25 subcomplex. Contacts the 5S rRNA and the P site tRNA. Forms a bridge to the 30S subunit in the 70S ribosome.

In terms of biological role, this is one of the proteins that bind and probably mediate the attachment of the 5S RNA into the large ribosomal subunit, where it forms part of the central protuberance. In the 70S ribosome it contacts protein S13 of the 30S subunit (bridge B1b), connecting the 2 subunits; this bridge is implicated in subunit movement. Contacts the P site tRNA; the 5S rRNA and some of its associated proteins might help stabilize positioning of ribosome-bound tRNAs. This is Large ribosomal subunit protein uL5 from Clostridium kluyveri (strain NBRC 12016).